The chain runs to 373 residues: Asporin (373 aa).

The N-terminal stretch at 1–15 (MKEYVMLLLLAVCSA) is a signal peptide. The propeptide occupies 16–32 (KPFFSPSHTALKNMMLK). Residue Ser-48 is glycosylated (O-linked (GalNAc...) serine). One can recognise an LRRNT domain in the interval 59–95 (FFPFDLFPTCPFGCQCYSRVVHCSDLGLTSVPNNIPF). 2 disulfide bridges follow: Cys-68–Cys-74 and Cys-72–Cys-81. LRR repeat units lie at residues 96-117 (DTRM…DFKG), 120-141 (SLYA…TFLT), 144-166 (KLRR…PKSL), 167-186 (AELR…TFKG), 189-212 (ALHV…AFEG), 235-255 (TLLE…EDLK), 259-280 (ELQR…TFAN), 283-305 (RVRE…QELK), 306-327 (YLQI…DFCP), 328-349 (TVPK…PMKY), and 350-373 (WEIQ…NVGK). An interaction with TGFB1 region spans residues 159 to 205 (PLNLPKSLAELRIHDNKVKKIQKDTFKGMNALHVLEMSANPLENNGI). Asn-275 is a glycosylation site (N-linked (GlcNAc...) asparagine). A disulfide bridge links Cys-326 with Cys-359.

This sequence belongs to the small leucine-rich proteoglycan (SLRP) family. SLRP class I subfamily. In terms of assembly, interacts with type I collagen. DCN can inhibit collagen binding. Interacts with TGFB1, TGFB2 and TGFB3. DCN, BGN, and FMOD inhibit binding to TGFB1. Interacts with BMP2. Interacts in vitro with type II collagen. In terms of tissue distribution, higher expression in heart, also detected in kidney, stomach, testes, and skin but only weakly in lung, skeletal muscle, small intestine, and thymus. Expressed specifically and predominantly in the periodontal ligament (PDL). During tooth development, strong expression is seen in the dental follicle, which is the progenitor tissue that forms cementum, alveolar bone, and the PDL. Expressed in the perichondria of the maxilla, mandible, vertebrae, and long bones. Predominantly expressed in the perichondrium/periosteum of long bones (at protein level).

It is found in the secreted. Its subcellular location is the extracellular space. The protein localises to the extracellular matrix. Functionally, binds calcium and plays a role in osteoblast-driven collagen biomineralization activity. Critical regulator of TGF-beta in articular cartilage and plays an essential role in cartilage homeostasis and osteoarthritis (OA) pathogenesis. Negatively regulates chondrogenesis in the articular cartilage by blocking the TGF-beta/receptor interaction on the cell surface and inhibiting the canonical TGF-beta/Smad signal. Negatively regulates periodontal ligament (PDL) differentiation and mineralization to ensure that the PDL is not ossified and to maintain homeostasis of the tooth-supporting system. Inhibits BMP2-induced cytodifferentiation of PDL cells by preventing its binding to BMPR1B/BMP type-1B receptor, resulting in inhibition of BMP-dependent activation of SMAD proteins. Inhibits the interaction between TGFB1 and TGF-beta receptor type II in the presence of heparin/heparan sulfate in vitro. The chain is Asporin (Aspn) from Mus musculus (Mouse).